The sequence spans 688 residues: Translation initiation factor IF-2 (688 aa).

Over residues 50–62 (LLSGKEKSEKTKE) the composition is skewed to basic and acidic residues. Positions 50-95 (LLSGKEKSEKTKEEDDEIETTAKNPIKESINNKKSNKRDDKNEKVN) are disordered. The segment covering 72–82 (KNPIKESINNK) has biased composition (low complexity). Positions 86–95 (KRDDKNEKVN) are enriched in basic and acidic residues. In terms of domain architecture, tr-type G spans 187–354 (KRSPIITVMG…MILLSSEILE (168 aa)). A G1 region spans residues 196–203 (GHVDHGKT). A GTP-binding site is contributed by 196–203 (GHVDHGKT). The G2 stretch occupies residues 221 to 225 (GITQH). Positions 242–245 (DTPG) are G3. GTP-binding positions include 242 to 246 (DTPGH) and 296 to 299 (NKID). The tract at residues 296-299 (NKID) is G4. Residues 332 to 334 (SAH) are G5.

Belongs to the TRAFAC class translation factor GTPase superfamily. Classic translation factor GTPase family. IF-2 subfamily.

It is found in the cytoplasm. In terms of biological role, one of the essential components for the initiation of protein synthesis. Protects formylmethionyl-tRNA from spontaneous hydrolysis and promotes its binding to the 30S ribosomal subunits. Also involved in the hydrolysis of GTP during the formation of the 70S ribosomal complex. This chain is Translation initiation factor IF-2, found in Clostridium botulinum (strain Langeland / NCTC 10281 / Type F).